A 373-amino-acid chain; its full sequence is Exonuclease V (373 aa).

Cys92 is a binding site for [4Fe-4S] cluster. 2 residues coordinate Mg(2+): Asp182 and Glu196. [4Fe-4S] cluster is bound by residues Cys343, Cys346, and Cys352.

It belongs to the EXO5 family. Monomer; monomeric form has weak exonuclease activity. Homodimer; homodimeric form is unsure but has much higher exonuclease activity, suggesting that it could homodimerize upon DNA-binding. Interacts with the replication protein A (RPA) complex. [4Fe-4S] cluster is required as a cofactor. It depends on Mg(2+) as a cofactor.

It is found in the nucleus. The protein resides in the cytoplasm. The protein localises to the cytosol. Its function is as follows. Single-stranded DNA (ssDNA) bidirectional exonuclease involved in DNA repair. Probably involved in DNA repair following ultraviolet (UV) irradiation and interstrand cross-links (ICLs) damage. Has both 5'-3' and 3'-5' exonuclease activities with a strong preference for 5'-ends. Acts as a sliding exonuclease that loads at ssDNA ends and then slides along the ssDNA prior to cutting; however the sliding and the 3'-5' exonuclease activities are abolished upon binding to the replication protein A (RPA) complex that enforces 5'-directionality activity. The protein is Exonuclease V (EXO5) of Homo sapiens (Human).